The following is a 297-amino-acid chain: MAESKAKNMFQKLSLTPKRNHEHDAGRNIETEEELLQKLKRLKLDNDYLHMWLSYEKLATIVENRSTDKTRKPEYGKLIFYYQGAAHALVSIWKRDSDLPFEQYISGDIARLFNKALDVAIRHMDPTVVHTIARDGGVALMSIDKPIEARDVLVRGENHLVAVPADGQLDFLERLIVLYYIMDSILIEERWNEYMVYTDKVWMMTMKEDKRCPLLENIIKEVEQVAVLLLVFQRKVECSERHKQLLASYRLDDWKAPIIKHNPPLSSLNPSEQKVFRRFLFYMMSNKRSVDKVLKHR.

The interval 1-29 (MAESKAKNMFQKLSLTPKRNHEHDAGRNI) is disordered. Over residues 19-29 (RNHEHDAGRNI) the composition is skewed to basic and acidic residues.

This is an uncharacterized protein from Caenorhabditis elegans.